A 401-amino-acid chain; its full sequence is MKAVGIVVEYNPFHNGHLYHVQQTRKKTSADCVIAVMSSSFTQRGEPAIVPKWERARMALAGGVDLVVELPYPFAVQTAEWFAQGAVSILDALFCEQLCFGSEHGSIEPFIKTAQLLVYKKEQHNEKVKQYVRQGINYAKAYALALYDIGHDTLDVSQPNNILGLHYVKAIIEQRSNIKPETIQRIVAHYHDETLPVNDNIASATSIRRFLQVSDDDVARYVPHTTYETLQTYRHTYMTWHDWEKYFPFLKYRLLTMEVDDIQQIAEVEEGIEYRLKKAIIHATSFHDFLSAVKTKRYTWTRLQRICTHILTNVTKKEIAKAIESKRATYVRPLAMNETGRAYLQEVKKHMTLPLVTNAKHMRHDPIYQIEKKATQAYVSILPEPLCSEALQREYKTPPLR.

ATP is bound by residues 7-20 (VVEY…HLYH), glycine 101, asparagine 160, and 185-186 (RI).

The protein belongs to the TmcAL family.

It is found in the cytoplasm. The enzyme catalyses cytidine(34) in elongator tRNA(Met) + acetate + ATP = N(4)-acetylcytidine(34) in elongator tRNA(Met) + AMP + diphosphate. Its function is as follows. Catalyzes the formation of N(4)-acetylcytidine (ac(4)C) at the wobble position of elongator tRNA(Met), using acetate and ATP as substrates. First activates an acetate ion to form acetyladenylate (Ac-AMP) and then transfers the acetyl group to tRNA to form ac(4)C34. In Anoxybacillus flavithermus (strain DSM 21510 / WK1), this protein is tRNA(Met) cytidine acetate ligase.